The following is a 468-amino-acid chain: UDP-N-acetylmuramate--L-alanine ligase (468 aa).

112-118 (GTHGKTT) provides a ligand contact to ATP.

This sequence belongs to the MurCDEF family.

The protein localises to the cytoplasm. The enzyme catalyses UDP-N-acetyl-alpha-D-muramate + L-alanine + ATP = UDP-N-acetyl-alpha-D-muramoyl-L-alanine + ADP + phosphate + H(+). Its pathway is cell wall biogenesis; peptidoglycan biosynthesis. Functionally, cell wall formation. The protein is UDP-N-acetylmuramate--L-alanine ligase of Bordetella avium (strain 197N).